Reading from the N-terminus, the 425-residue chain is CinA-like protein (425 aa).

Belongs to the CinA family.

This is CinA-like protein from Desulfovibrio desulfuricans (strain ATCC 27774 / DSM 6949 / MB).